The sequence spans 343 residues: Protein RecA (343 aa).

Residue 66-73 participates in ATP binding; sequence GPESSGKT.

This sequence belongs to the RecA family.

It is found in the cytoplasm. Can catalyze the hydrolysis of ATP in the presence of single-stranded DNA, the ATP-dependent uptake of single-stranded DNA by duplex DNA, and the ATP-dependent hybridization of homologous single-stranded DNAs. It interacts with LexA causing its activation and leading to its autocatalytic cleavage. The protein is Protein RecA of Rickettsia africae (strain ESF-5).